We begin with the raw amino-acid sequence, 335 residues long: MKTANFSFALCLSVVIMLFIKCTRSEQDLSVTKDAIAQKSGVTVSAVNLSNLIAYKNSDHQISAGYYRTWRDSATASGNLPSMRWLPDSLDMVMVFPDYTPPENAYWNTLKTNYVPYLHKRGTKVIITLGDLNSATTTGGQDSIGYSSWAKGIYDKWVGEYNLDGIDIDIESSPSGATLTKFVAATKALSKYFGPKSGTGKTFVYDTNQNPTNFFIQTAPRYNYVFLQAYGRSTTNLTTVSGLYAPYISMKQFLPGFSFYEENGYPGNYWNDVRYPQNGTGRAYDYARWQPATGKKGGVFSYAIERDAPLTSSNDNTLRAPNFRVTKDLIKIMNP.

An N-terminal signal peptide occupies residues 1–45; sequence MKTANFSFALCLSVVIMLFIKCTRSEQDLSVTKDAIAQKSGVTVS. The 261-residue stretch at 61–321 folds into the GH18 domain; it reads QISAGYYRTW…SSNDNTLRAP (261 aa). O-linked (Man...) serine glycans are attached at residues serine 73, serine 89, and serine 143. Glutamate 171 (proton donor) is an active-site residue.

Belongs to the glycosyl hydrolase 18 family. As to quaternary structure, monomer. Post-translationally, carbohydrates at Ser-73, Ser-89 and Ser-143 consist of (2-OMe)Man1-4GlcNAcU1-4GlcU1-4Glc1-4(2-OMe)GlcU1-4[(2-OMe)Rham1-2]Man.

It localises to the secreted. The catalysed reaction is an N(4)-(oligosaccharide-(1-&gt;3)-[oligosaccharide-(1-&gt;6)]-beta-D-Man-(1-&gt;4)-beta-D-GlcNAc-(1-&gt;4)-alpha-D-GlcNAc)-L-asparaginyl-[protein] + H2O = an oligosaccharide-(1-&gt;3)-[oligosaccharide-(1-&gt;6)]-beta-D-Man-(1-&gt;4)-D-GlcNAc + N(4)-(N-acetyl-beta-D-glucosaminyl)-L-asparaginyl-[protein]. Functionally, endohydrolysis of the di-N-acetylchitobiosyl unit in high-mannose glycopeptides and glycoproteins. Complex biantennary glycans are the preferred substrates. Tri- and tetraantennary glycans are not hydrolyzed, and high mannose glycans are very poor substrates. This Elizabethkingia meningoseptica (Chryseobacterium meningosepticum) protein is Endo-beta-N-acetylglucosaminidase F2 (endOF2).